The following is a 588-amino-acid chain: Proline--tRNA ligase (588 aa).

The protein belongs to the class-II aminoacyl-tRNA synthetase family. ProS type 1 subfamily. In terms of assembly, homodimer.

The protein resides in the cytoplasm. It carries out the reaction tRNA(Pro) + L-proline + ATP = L-prolyl-tRNA(Pro) + AMP + diphosphate. Catalyzes the attachment of proline to tRNA(Pro) in a two-step reaction: proline is first activated by ATP to form Pro-AMP and then transferred to the acceptor end of tRNA(Pro). As ProRS can inadvertently accommodate and process non-cognate amino acids such as alanine and cysteine, to avoid such errors it has two additional distinct editing activities against alanine. One activity is designated as 'pretransfer' editing and involves the tRNA(Pro)-independent hydrolysis of activated Ala-AMP. The other activity is designated 'posttransfer' editing and involves deacylation of mischarged Ala-tRNA(Pro). The misacylated Cys-tRNA(Pro) is not edited by ProRS. The protein is Proline--tRNA ligase of Helicobacter hepaticus (strain ATCC 51449 / 3B1).